The sequence spans 527 residues: Secologanin synthase 2 (527 aa).

Residues 1-11 (MEMDMDIIRKA) are Lumenal-facing. The helical transmembrane segment at 12 to 32 (IAATIFALVMAWAWRVLDWAW) threads the bilayer. Over 33–527 (FTPKRIEKRL…IYKKLERQNF (495 aa)) the chain is Cytoplasmic. Cysteine 470 contacts heme.

The protein belongs to the cytochrome P450 family. Heme serves as cofactor. In terms of tissue distribution, expressed in leaves (especially in leaf epidermis), and, to a lower extent, in roots, stems, flower buds and flowers.

The protein resides in the endoplasmic reticulum membrane. It carries out the reaction loganin + reduced [NADPH--hemoprotein reductase] + O2 = secologanin + oxidized [NADPH--hemoprotein reductase] + 2 H2O + H(+). The catalysed reaction is secologanin + reduced [NADPH--hemoprotein reductase] + O2 = secoxyloganin + oxidized [NADPH--hemoprotein reductase] + H2O + 2 H(+). Its pathway is alkaloid biosynthesis. Component of the seco-iridoid and derivatives monoterpenoid indole alkaloids (MIAs, e.g. secologanin) biosynthesis pathway. Catalyzes the conversion of loganin into secologanin. Catalyzes the conversion of secologanin into secoxyloganin. The sequence is that of Secologanin synthase 2 from Catharanthus roseus (Madagascar periwinkle).